A 195-amino-acid polypeptide reads, in one-letter code: MEAFTIHTGRAVPLRRSDVDTDQIIPSEWLKRIERTGFGAGLFAQWRADDGFVLNEPAYAAASILLAGSDFGTGSSREHAVWALQDYGFRAVLSPRFADIFRGNALGNGLLPVQLSAETVEALTSAVEADPTIEITVDLVAREVRGAGLVATFDLDDFTRWRLMEGLDDVGLTLRHEDMITSFEAGRPAWSPTTA.

The protein belongs to the LeuD family. LeuD type 1 subfamily. Heterodimer of LeuC and LeuD.

The catalysed reaction is (2R,3S)-3-isopropylmalate = (2S)-2-isopropylmalate. It participates in amino-acid biosynthesis; L-leucine biosynthesis; L-leucine from 3-methyl-2-oxobutanoate: step 2/4. Catalyzes the isomerization between 2-isopropylmalate and 3-isopropylmalate, via the formation of 2-isopropylmaleate. The protein is 3-isopropylmalate dehydratase small subunit of Frankia casuarinae (strain DSM 45818 / CECT 9043 / HFP020203 / CcI3).